Reading from the N-terminus, the 881-residue chain is Ent-kaurene synthase CPS/KS, chloroplastic (881 aa).

A chloroplast-targeting transit peptide spans 1 to 41 (MASSTLIQNRSCGVTSSMSSFQIFRGQPLRFPGTRTPAAVQ). Mg(2+)-binding residues include Asp-417, Asp-419, Asp-635, Asp-639, Asn-778, Asp-779, and Glu-786. The short motif at 417–422 (DVDDTA) is the DXDDTA motif element. The short motif at 635–639 (DDYFD) is the DDXXD motif element.

The protein belongs to the terpene synthase family. Mg(2+) is required as a cofactor.

The protein localises to the plastid. It is found in the chloroplast. The catalysed reaction is (2E,6E,10E)-geranylgeranyl diphosphate = ent-copalyl diphosphate. The enzyme catalyses ent-copalyl diphosphate = ent-kaur-16-ene + diphosphate. It carries out the reaction ent-copalyl diphosphate = ent-beyerene + diphosphate. It catalyses the reaction ent-copalyl diphosphate = ent-sandaracopimara-8(14),15-diene + diphosphate. The catalysed reaction is ent-copalyl diphosphate = ent-isokaurene + diphosphate. The enzyme catalyses ent-copalyl diphosphate + H2O = 16alpha-hydroxy-ent-kaurene + diphosphate. Its pathway is secondary metabolite biosynthesis; terpenoid biosynthesis. In terms of biological role, bifunctional copalyl diphosphate/kaurene synthase involved in the biosynthesis of labdane-related diterpenoids (LRDs) natural products such as ent-beyerene, an antimicrobial compound. Supports the conversion of geranylgeranyl diphosphate (GGPP) to ent-copalyl diphosphate (ent-CDP). Also catalyzes the subsequent cyclization of ent-CDP into many diterpenes, including ent-kaur-16-ene as the major product, and ent-beyerene, ent-sandaracopimaradiene, ent-kaur-15-ene (ent-isokaurene) and 16-hydroxy-ent-kaurene (ent-16-alpha-hydroxy-kaurene) as minor products. In Physcomitrium patens (Spreading-leaved earth moss), this protein is Ent-kaurene synthase CPS/KS, chloroplastic.